The primary structure comprises 130 residues: Small ribosomal subunit protein uS8 (130 aa).

The protein belongs to the universal ribosomal protein uS8 family. In terms of assembly, part of the 30S ribosomal subunit. Contacts proteins S5 and S12.

One of the primary rRNA binding proteins, it binds directly to 16S rRNA central domain where it helps coordinate assembly of the platform of the 30S subunit. This is Small ribosomal subunit protein uS8 from Idiomarina loihiensis (strain ATCC BAA-735 / DSM 15497 / L2-TR).